We begin with the raw amino-acid sequence, 143 residues long: Putative phosphotransferase IIA component SgcA (143 aa).

A PTS EIIA type-2 domain is found at 1–143 (MINDIKWVQA…DDALFALVSG (143 aa)). His-63 (tele-phosphohistidine intermediate) is an active-site residue.

Its subcellular location is the cytoplasm. Functionally, the phosphoenolpyruvate-dependent sugar phosphotransferase system (sugar PTS), a major carbohydrate active -transport system, catalyzes the phosphorylation of incoming sugar substrates concomitantly with their translocation across the cell membrane. This Escherichia coli (strain K12) protein is Putative phosphotransferase IIA component SgcA (sgcA).